Consider the following 587-residue polypeptide: Arginine--tRNA ligase (587 aa).

The 'HIGH' region motif lies at 127–137; the sequence is PNLAKEMHVGH.

Belongs to the class-I aminoacyl-tRNA synthetase family. In terms of assembly, monomer.

It is found in the cytoplasm. It carries out the reaction tRNA(Arg) + L-arginine + ATP = L-arginyl-tRNA(Arg) + AMP + diphosphate. The protein is Arginine--tRNA ligase of Pseudomonas aeruginosa (strain ATCC 15692 / DSM 22644 / CIP 104116 / JCM 14847 / LMG 12228 / 1C / PRS 101 / PAO1).